A 290-amino-acid chain; its full sequence is Ribonuclease HIII (290 aa).

The 213-residue stretch at 78 to 290 folds into the RNase H type-2 domain; that stretch reads LPLIGTDEVG…FKNTEKAKNA (213 aa). A divalent metal cation is bound by residues D84, E85, and D187.

The protein belongs to the RNase HII family. RnhC subfamily. The cofactor is Mn(2+). Mg(2+) is required as a cofactor.

It is found in the cytoplasm. The catalysed reaction is Endonucleolytic cleavage to 5'-phosphomonoester.. Its function is as follows. Endonuclease that specifically degrades the RNA of RNA-DNA hybrids. In Streptococcus pneumoniae (strain CGSP14), this protein is Ribonuclease HIII.